The sequence spans 162 residues: 2-C-methyl-D-erythritol 2,4-cyclodiphosphate synthase (162 aa).

Positions 9 and 11 each coordinate a divalent metal cation. 4-CDP-2-C-methyl-D-erythritol 2-phosphate contacts are provided by residues 9–11 (DVH) and 35–36 (HS). His43 contributes to the a divalent metal cation binding site. Residues 57 to 59 (DIG), 62 to 66 (FPDTD), 133 to 136 (TTTE), Phe140, and Arg143 each bind 4-CDP-2-C-methyl-D-erythritol 2-phosphate.

This sequence belongs to the IspF family. In terms of assembly, homotrimer. A divalent metal cation serves as cofactor.

It carries out the reaction 4-CDP-2-C-methyl-D-erythritol 2-phosphate = 2-C-methyl-D-erythritol 2,4-cyclic diphosphate + CMP. It functions in the pathway isoprenoid biosynthesis; isopentenyl diphosphate biosynthesis via DXP pathway; isopentenyl diphosphate from 1-deoxy-D-xylulose 5-phosphate: step 4/6. Its function is as follows. Involved in the biosynthesis of isopentenyl diphosphate (IPP) and dimethylallyl diphosphate (DMAPP), two major building blocks of isoprenoid compounds. Catalyzes the conversion of 4-diphosphocytidyl-2-C-methyl-D-erythritol 2-phosphate (CDP-ME2P) to 2-C-methyl-D-erythritol 2,4-cyclodiphosphate (ME-CPP) with a corresponding release of cytidine 5-monophosphate (CMP). In Histophilus somni (strain 2336) (Haemophilus somnus), this protein is 2-C-methyl-D-erythritol 2,4-cyclodiphosphate synthase.